The primary structure comprises 652 residues: RNA-binding E3 ubiquitin-protein ligase MEX3C (652 aa).

Disordered regions lie at residues 15–39 (AAPA…ELEG) and 80–136 (QARR…EDRP). The span at 18–33 (APLPQPPPLPPPPPAG) shows a compositional bias: pro residues. A compositionally biased stretch (acidic residues) spans 101 to 134 (AELELEVDEEEGEEAELDGELLEEEELEEAEEED). KH domains follow at residues 225–286 (TTEC…KREI) and 319–380 (QTTV…REEI). Disordered regions lie at residues 429 to 448 (ARMM…SGST) and 506 to 566 (FEPV…HVGL). The span at 430–448 (RMMSNYRNDSSSSLGSGST) shows a compositional bias: low complexity. Residues 519-537 (PSGNMKTQRRGSQPSTPRL) show a composition bias toward polar residues. Residues Ser530 and Ser538 each carry the phosphoserine modification. A compositionally biased stretch (basic and acidic residues) spans 544-555 (SIEHPLARRVRS). The RING-type zinc finger occupies 601-641 (CVICFENEVIAALVPCGHNLFCMECANKICEKRTPSCPVCQ).

As to quaternary structure, interacts with USP7, which antagonizes the ability to degrade mRNA. In terms of processing, phosphorylated.

It is found in the nucleus. Its subcellular location is the cytoplasm. The enzyme catalyses S-ubiquitinyl-[E2 ubiquitin-conjugating enzyme]-L-cysteine + [acceptor protein]-L-lysine = [E2 ubiquitin-conjugating enzyme]-L-cysteine + N(6)-ubiquitinyl-[acceptor protein]-L-lysine.. Its function is as follows. RNA-binding protein. May be involved in post-transcriptional regulatory mechanisms, modulating levels of some mRNAs by promoting their degradation in a way involving ubiquitin ligase activity. May act as suppressor of replication stress and chromosome missegregation. This is RNA-binding E3 ubiquitin-protein ligase MEX3C (Mex3c) from Mus musculus (Mouse).